The primary structure comprises 624 residues: Ceramide transfer protein (624 aa).

The span at 1 to 11 shows a compositional bias: polar residues; that stretch reads MSDNQSWNSSG. Residues 1-24 are disordered; that stretch reads MSDNQSWNSSGSEEDPETESGPPV. The PH domain maps to 23–117; it reads PVERCGVLSK…WIDAIEQHKT (95 aa). Serine 126 bears the Phosphoserine mark. Serine 132 carries the phosphoserine; by PKD modification. At serine 135 the chain carries Phosphoserine. Residues 263 to 303 adopt a coiled-coil conformation; it reads IELMVKREDSWQKRLDKETEKKRRTEEAYKNAMTELKKKSH. Serine 315 bears the Phosphoserine mark. The FFAT motif lies at 321 to 327; it reads EFFDAVE. At tyrosine 372 the chain carries Phosphotyrosine. Serine 373, serine 377, and serine 380 each carry phosphoserine. The region spanning 389–618 is the START domain; sequence DVHRFSSQVE…FTSYVQEKTA (230 aa). Positions 472, 493, 530, and 579 each coordinate an N-acylsphing-4-enine.

In terms of assembly, interacts with VAPA and VAPB. Interaction with VAPB is less efficient than with VAPA. Interacts (via FFAT motif) with MOSPD2 (via MSP domain). In terms of processing, phosphorylation on Ser-132 decreases the affinity toward phosphatidylinositol 4-phosphate at Golgi membranes and reduces ceramide transfer activity. Inactivated by hyperphosphorylation of serine residues by CSNK1G2/CK1 that triggers dissociation from the Golgi complex, thus down-regulating ER-to-Golgi transport of ceramide and sphingomyelin synthesis. As to expression, widely expressed.

Its subcellular location is the cytoplasm. The protein resides in the golgi apparatus. The protein localises to the endoplasmic reticulum. It carries out the reaction N-hexadecanoylsphing-4-enine(in) = N-hexadecanoylsphing-4-enine(out). In terms of biological role, shelters ceramides and diacylglycerol lipids inside its START domain and mediates the intracellular trafficking of ceramides and diacylglycerol lipids in a non-vesicular manner. The protein is Ceramide transfer protein of Homo sapiens (Human).